The chain runs to 133 residues: ATP synthase epsilon chain, chloroplastic (133 aa).

Belongs to the ATPase epsilon chain family. F-type ATPases have 2 components, CF(1) - the catalytic core - and CF(0) - the membrane proton channel. CF(1) has five subunits: alpha(3), beta(3), gamma(1), delta(1), epsilon(1). CF(0) has three main subunits: a, b and c.

The protein localises to the plastid. Its subcellular location is the chloroplast thylakoid membrane. In terms of biological role, produces ATP from ADP in the presence of a proton gradient across the membrane. This chain is ATP synthase epsilon chain, chloroplastic, found in Lotus japonicus (Lotus corniculatus var. japonicus).